The following is a 605-amino-acid chain: MSLKHQKQSYQPLPTAAAMDNPAMIQSSGSSGSSSSEEGGSREDVANLSPLGLPTTYSSQQLMPSDTDSMEEERHRLRPHHHHHHPLGEHHHIPGIPPSAVVPSRLSSVGRSQWFTVTVLCFVNLINYMDRFTIAGVLTDVRNDFDIGNDSAGLLQTVFVISYMVCAPIFGYLGDRYSRPWIMAVGVGLWSTTTLLGSFMKQFGWFIAFRALVGIGEASYSTIAPTIISDLFVHDMRSKMLALFYFAIPVGSGLGYIVGSKTAHLANDWRWALRVTPILGIVAVFLILLIKDPVRGHSEGSHNLEATTYKQDIKALVRNRSFMLSTAGFTCVAFVAGALAWWGPSFIYLGMKMQPGNENIVQDDVAFNFGVITMLAGLLGVPLGSFLSQYLVKRYPTADPVICAFGLLVSAPLLTGACLLVNSNSVGTYALIFFGQLALNLNWAIVADILLYVVVPTRRSTAEAFQILISHALGDAGSPYLVGAISEAIMKHLHKNPSDSGLTTELRSMSQVAGSAISNATQVIAEATTSLMETARSSASQEYSDVEQFEGLQYALFSTSFVEVLGGIFFIFTACFIIKDKYNATRGLQDATAQQQQRDERGQIA.

A disordered region spans residues 1–94; that stretch reads MSLKHQKQSY…HPLGEHHHIP (94 aa). Residues 27-38 are compositionally biased toward low complexity; it reads SSGSSGSSSSEE. The span at 55-67 shows a compositional bias: polar residues; it reads TTYSSQQLMPSDT. A compositionally biased stretch (basic residues) spans 76-85; it reads RLRPHHHHHH. A helical membrane pass occupies residues 115–137; the sequence is FTVTVLCFVNLINYMDRFTIAGV. N-linked (GlcNAc...) asparagine glycosylation is present at Asn-149. 5 helical membrane passes run 153–173, 180–200, 203–223, 240–260, and 271–291; these read GLLQTVFVISYMVCAPIFGYL, PWIMAVGVGLWSTTTLLGSFM, FGWFIAFRALVGIGEASYSTI, MLALFYFAIPVGSGLGYIVGS, and WALRVTPILGIVAVFLILLIK. N-linked (GlcNAc...) asparagine glycosylation occurs at Asn-319. The next 5 helical transmembrane spans lie at 329–349, 367–387, 401–421, 431–451, and 465–485; these read FTCVAFVAGALAWWGPSFIYL, FNFGVITMLAGLLGVPLGSFL, VICAFGLLVSAPLLTGACLLV, LIFFGQLALNLNWAIVADILL, and FQILISHALGDAGSPYLVGAI. N-linked (GlcNAc...) asparagine glycosylation is present at Asn-519. Residues 558–578 form a helical membrane-spanning segment; sequence STSFVEVLGGIFFIFTACFII. An N-linked (GlcNAc...) asparagine glycan is attached at Asn-583.

This sequence belongs to the major facilitator superfamily. Spinster (TC 2.A.1.49) family. As to expression, enriched in brain (at protein level).

The protein localises to the late endosome membrane. It is found in the lysosome membrane. Probable sphingolipid transporter that plays a central role in endosomes and/or lysosomes storage. Involved in TGF-beta-mediated synaptic growth regulation both pre- and postsynaptically via its function in endosomal storage regulation. Also required during oogenesis by regulating yolk spheres storage. This is Protein spinster (spin) from Drosophila melanogaster (Fruit fly).